The chain runs to 409 residues: Wadjet protein JetD (409 aa).

Component of antiplasmid transformation system Wadjet type I, composed of JetA, JetB, JetC and JetD. Expression of Wadjet type I in B.subtilis (strain BEST7003) reduces the transformation efficiency of plasmid pHCMC05. The chain is Wadjet protein JetD from Bacillus cereus (strain Q1).